The following is a 221-amino-acid chain: Large ribosomal subunit protein uL3 (221 aa).

The segment at 131–165 (HNQSRGPETHGSRHHRRPGSMGPIKGKIKGKKLPG) is disordered.

This sequence belongs to the universal ribosomal protein uL3 family. As to quaternary structure, part of the 50S ribosomal subunit. Forms a cluster with proteins L14 and L19.

Its function is as follows. One of the primary rRNA binding proteins, it binds directly near the 3'-end of the 23S rRNA, where it nucleates assembly of the 50S subunit. In Phytoplasma australiense, this protein is Large ribosomal subunit protein uL3.